Reading from the N-terminus, the 337-residue chain is tRNA N6-adenosine threonylcarbamoyltransferase (337 aa).

2 residues coordinate Fe cation: histidine 111 and histidine 115. Substrate contacts are provided by residues 134–138 (LVSGG), aspartate 167, glycine 180, and asparagine 272. Position 300 (aspartate 300) interacts with Fe cation.

This sequence belongs to the KAE1 / TsaD family. Fe(2+) is required as a cofactor.

The protein localises to the cytoplasm. The catalysed reaction is L-threonylcarbamoyladenylate + adenosine(37) in tRNA = N(6)-L-threonylcarbamoyladenosine(37) in tRNA + AMP + H(+). In terms of biological role, required for the formation of a threonylcarbamoyl group on adenosine at position 37 (t(6)A37) in tRNAs that read codons beginning with adenine. Is involved in the transfer of the threonylcarbamoyl moiety of threonylcarbamoyl-AMP (TC-AMP) to the N6 group of A37, together with TsaE and TsaB. TsaD likely plays a direct catalytic role in this reaction. The sequence is that of tRNA N6-adenosine threonylcarbamoyltransferase from Shewanella loihica (strain ATCC BAA-1088 / PV-4).